Reading from the N-terminus, the 95-residue chain is Cell division topological specificity factor (95 aa).

It belongs to the MinE family.

Prevents the cell division inhibition by proteins MinC and MinD at internal division sites while permitting inhibition at polar sites. This ensures cell division at the proper site by restricting the formation of a division septum at the midpoint of the long axis of the cell. This chain is Cell division topological specificity factor, found in Trichodesmium erythraeum (strain IMS101).